The chain runs to 80 residues: RNA-binding protein Hfq (80 aa).

Residues aspartate 10–methionine 70 form the Sm domain.

This sequence belongs to the Hfq family. In terms of assembly, homohexamer.

Functionally, RNA chaperone that binds small regulatory RNA (sRNAs) and mRNAs to facilitate mRNA translational regulation in response to envelope stress, environmental stress and changes in metabolite concentrations. Also binds with high specificity to tRNAs. The polypeptide is RNA-binding protein Hfq (Rhizobium rhizogenes (strain K84 / ATCC BAA-868) (Agrobacterium radiobacter)).